A 260-amino-acid polypeptide reads, in one-letter code: Hydroxyethylthiazole kinase 1 (260 aa).

Substrate is bound at residue methionine 39. 2 residues coordinate ATP: arginine 115 and threonine 160. Glycine 187 is a binding site for substrate.

Belongs to the Thz kinase family. It depends on Mg(2+) as a cofactor.

The enzyme catalyses 5-(2-hydroxyethyl)-4-methylthiazole + ATP = 4-methyl-5-(2-phosphooxyethyl)-thiazole + ADP + H(+). Its pathway is cofactor biosynthesis; thiamine diphosphate biosynthesis; 4-methyl-5-(2-phosphoethyl)-thiazole from 5-(2-hydroxyethyl)-4-methylthiazole: step 1/1. Its function is as follows. Catalyzes the phosphorylation of the hydroxyl group of 4-methyl-5-beta-hydroxyethylthiazole (THZ). The sequence is that of Hydroxyethylthiazole kinase 1 from Streptococcus pneumoniae (strain JJA).